A 407-amino-acid polypeptide reads, in one-letter code: Tryptophan synthase beta chain (407 aa).

Lys91 is subject to N6-(pyridoxal phosphate)lysine.

It belongs to the TrpB family. As to quaternary structure, tetramer of two alpha and two beta chains. Pyridoxal 5'-phosphate is required as a cofactor.

The enzyme catalyses (1S,2R)-1-C-(indol-3-yl)glycerol 3-phosphate + L-serine = D-glyceraldehyde 3-phosphate + L-tryptophan + H2O. It functions in the pathway amino-acid biosynthesis; L-tryptophan biosynthesis; L-tryptophan from chorismate: step 5/5. In terms of biological role, the beta subunit is responsible for the synthesis of L-tryptophan from indole and L-serine. The chain is Tryptophan synthase beta chain from Streptococcus pneumoniae (strain 70585).